Reading from the N-terminus, the 340-residue chain is MLSLSKNWNTLIKPNRVTYENFPETNNKAKIIVEPLERGFGLTLGNAMRRVLLSSLQGAAITSIKIPAIEHEFSSIPGVQEDVSEVILNIKGIEVKMHVSEKRIIKLKAMGPCVVTAGMIDTGHDVEILNPDHVICNLAKNKQLEMELTCKVGKGYVLSTNSYEDNLPIGEIAIDALFNPVKSVTYKVENTRVGQVTDYDKLIMFVETNGDVLPEMAVGLAARILQEQLQLFIAFEEQEEDKQVKTDSLPFSPYLLKRVDELELSVRSANCLKNDNIIYIGDLVKRTESDMLRTPNFGRKSLNEIKEILAKFNLRFGMDVPDWPPENIQELSKRYEDSYN.

Positions 1–236 are alpha N-terminal domain (alpha-NTD); the sequence is MLSLSKNWNT…EQLQLFIAFE (236 aa). The alpha C-terminal domain (alpha-CTD) stretch occupies residues 251-340; sequence FSPYLLKRVD…LSKRYEDSYN (90 aa).

It belongs to the RNA polymerase alpha chain family. In terms of assembly, homodimer. The RNAP catalytic core consists of 2 alpha, 1 beta, 1 beta' and 1 omega subunit. When a sigma factor is associated with the core the holoenzyme is formed, which can initiate transcription.

It carries out the reaction RNA(n) + a ribonucleoside 5'-triphosphate = RNA(n+1) + diphosphate. DNA-dependent RNA polymerase catalyzes the transcription of DNA into RNA using the four ribonucleoside triphosphates as substrates. This is DNA-directed RNA polymerase subunit alpha from Rickettsia prowazekii (strain Madrid E).